Here is a 213-residue protein sequence, read N- to C-terminus: Probable anti-sigma-F factor NrsF (213 aa).

6 helical membrane-spanning segments follow: residues 27–47 (ALAIGWGAAGATLLMLALLQV), 51–71 (LGLALLLPMFWVKVGFVTCLA), 91–111 (VPAALGLPVLGMWAIAAFTLI), 126–146 (TWKSCPLLIAMLSVPVFAAVL), 159–179 (LAGFAAGLLAGAVAAVVYCLH), and 187–207 (FIGFWYLLGMLIPAAVGVLLG).

This sequence belongs to the NrsF anti-sigma-F factor family.

The protein localises to the cell inner membrane. In terms of biological role, probably an anti-sigma factor for extracytoplasmic function (ECF) sigma factor sigma-F (SigF), which responds to (hypo)chlorite. ECF sigma factors are held in an inactive form by a cognate anti-sigma factor. This Azospira oryzae (strain ATCC BAA-33 / DSM 13638 / PS) (Dechlorosoma suillum) protein is Probable anti-sigma-F factor NrsF.